We begin with the raw amino-acid sequence, 362 residues long: MTTPTIELKPSAHPLSDSERAAILANPGFGRHFTDHMVTIKWTEGRGWHDGQLVPYAPLSLDPATMVLHYAQEIFEGLKAYRRPDGSVATFRPEKNGARFQASSRRLGMPELPVDTFIEACDALVAQDEKWVPAHGGEESLYLRPFMIATEVGLGVRPANEYLFIVIASPAGAYFPGGVKPVSIWVSEDRVRAVPGGMGDAKTGGNYAASLLAQAEAAAKGCDQVCYLDAIERKWVEELGGMNLYFVYGNKIVTPSLTGSILEGVTRDSLLTVARDLGYEAEEGRVSVDQWQRDSENGTLTEVFACGTAAVITPVGTVKRAGAQWQQSGGETGEVTQRLRDALLDIQRGTVADPHGWMHTLA.

K202 carries the post-translational modification N6-(pyridoxal phosphate)lysine.

This sequence belongs to the class-IV pyridoxal-phosphate-dependent aminotransferase family. Pyridoxal 5'-phosphate serves as cofactor.

The catalysed reaction is L-leucine + 2-oxoglutarate = 4-methyl-2-oxopentanoate + L-glutamate. It carries out the reaction L-isoleucine + 2-oxoglutarate = (S)-3-methyl-2-oxopentanoate + L-glutamate. It catalyses the reaction L-valine + 2-oxoglutarate = 3-methyl-2-oxobutanoate + L-glutamate. It functions in the pathway amino-acid biosynthesis; L-isoleucine biosynthesis; L-isoleucine from 2-oxobutanoate: step 4/4. Its pathway is amino-acid biosynthesis; L-leucine biosynthesis; L-leucine from 3-methyl-2-oxobutanoate: step 4/4. It participates in amino-acid biosynthesis; L-valine biosynthesis; L-valine from pyruvate: step 4/4. Functionally, acts on leucine, isoleucine and valine. This Streptomyces coelicolor (strain ATCC BAA-471 / A3(2) / M145) protein is Probable branched-chain-amino-acid aminotransferase (ilvE).